A 384-amino-acid polypeptide reads, in one-letter code: Zinc transporter 7 (384 aa).

A signal peptide spans 1-25 (MERFVQFLRRGNGLMAASLAAGSCA). Residues 26-46 (EEVAKAEGAGCRDDAAALRLK) are Extracellular-facing. A helical membrane pass occupies residues 47-67 (GVAMATILVAGVVGVGLPLAG). Over 68-79 (RKRRALRTDSAA) the chain is Cytoplasmic. The helical transmembrane segment at 80-100 (FVAAKAFAAGVILATGFVHML) threads the bilayer. At 101 to 119 (HDAEHALSSPCLPAHPWRS) the chain is on the extracellular side. The chain crosses the membrane as a helical span at residues 120–140 (FPFPGFVAMSAALATLVLDFL). The Cytoplasmic segment spans residues 141-227 (ATRFYEGKHR…GEGEVPAQVR (87 aa)). The interval 185-222 (DNKAPLLQPHSHSHSHPHGHGHGHELAQPEGSGGEGEV) is disordered. Over residues 195–205 (SHSHSHPHGHG) the composition is skewed to basic residues. A helical transmembrane segment spans residues 228–248 (SVVVSQILEMGIVSHSVIIGL). At 249 to 261 (SLGVSRSPCTIRP) the chain is on the extracellular side. Residues 262–282 (LVAALSFHQFFEGFALGGCIA) traverse the membrane as a helical segment. Topologically, residues 283–291 (QAQFKTLSA) are cytoplasmic. Residues 292–312 (AIMACFFAITTPAGIAAGAGV) form a helical membrane-spanning segment. Over 313-323 (ASFYNANSPRA) the chain is Extracellular. A helical transmembrane segment spans residues 324–344 (LVVEGILDSVSAGILIYMSLV). The Cytoplasmic portion of the chain corresponds to 345-363 (DLIAADFLGGKMTGSTRQQ). A helical membrane pass occupies residues 364–384 (VMAYIALFLGALSMSSLAIWA).

This sequence belongs to the ZIP transporter (TC 2.A.5) family.

The protein resides in the cell membrane. Zinc transporter that may be involved in zinc uptake from the rhizosphere. The sequence is that of Zinc transporter 7 (ZIP7) from Oryza sativa subsp. japonica (Rice).